A 455-amino-acid polypeptide reads, in one-letter code: Hexokinase-2 (455 aa).

The region spanning 3–445 is the Hexokinase domain; sequence ANFQQAVKKL…SGIGAALCAL (443 aa). Residues 57–195 are hexokinase small subdomain; the sequence is TGAETGDFLA…NLPIRIEAVI (139 aa). 68 to 73 is a binding site for ATP; it reads DFGGTN. Substrate-binding positions include 144–145, 161–162, and 196–197; these read SY, TK, and ND. A hexokinase large subdomain region spans residues 196-434; the sequence is NDTVGTLVTR…KLISIGIAKD (239 aa). Thr222 is a binding site for ATP. Substrate-binding residues include Asn225, Glu252, and Glu283. Residues 288-289, 325-329, and 400-404 contribute to the ATP site; these read GM, TSVLS, and SLVEH.

The protein belongs to the hexokinase family. In terms of assembly, monomer.

The enzyme catalyses a D-hexose + ATP = a D-hexose 6-phosphate + ADP + H(+). It catalyses the reaction D-mannose + ATP = D-mannose 6-phosphate + ADP + H(+). The catalysed reaction is D-fructose + ATP = D-fructose 6-phosphate + ADP + H(+). It carries out the reaction D-glucose + ATP = D-glucose 6-phosphate + ADP + H(+). It functions in the pathway carbohydrate metabolism; hexose metabolism. Its pathway is carbohydrate degradation; glycolysis; D-glyceraldehyde 3-phosphate and glycerone phosphate from D-glucose: step 1/4. Catalyzes the phosphorylation of hexose (six-carbon sugars) to hexose 6-phosphate. Phosphorylates D-glucose, D-fructose and D-mannose. Compared to hxk1, has a much higher affinity for D-glucose. Constitutes the initial enzyme of glycolysis by catalyzing the phosphorylation of glucose to D-glucose 6-phosphate. The polypeptide is Hexokinase-2 (Schizosaccharomyces pombe (strain 972 / ATCC 24843) (Fission yeast)).